We begin with the raw amino-acid sequence, 318 residues long: NADH-quinone oxidoreductase subunit H 2 (318 aa).

A run of 9 helical transmembrane segments spans residues 4-24, 77-97, 106-126, 146-166, 179-199, 214-234, 238-258, 262-282, and 293-313; these read LLIALFSLILLLALLGAAGVF, LAPALAAFPMLAGFGVVAFAP, VGVLFVMGMLALTVWALVLGA, LAYESFLGLSLMGCVLLAGSF, LWFILLQPLGAALFFLAGLAA, LVAGFMTEYSGMSFALFFLGE, ILLVAALFTTLFLGGWAGPIL, VWFGLKVAAISVVFVWLRAAL, and FAWKVALPLALLNLLVTAWIA.

The protein belongs to the complex I subunit 1 family. NDH-1 is composed of 14 different subunits. Subunits NuoA, H, J, K, L, M, N constitute the membrane sector of the complex.

It localises to the cell inner membrane. It catalyses the reaction a quinone + NADH + 5 H(+)(in) = a quinol + NAD(+) + 4 H(+)(out). Its function is as follows. NDH-1 shuttles electrons from NADH, via FMN and iron-sulfur (Fe-S) centers, to quinones in the respiratory chain. The immediate electron acceptor for the enzyme in this species is believed to be ubiquinone. Couples the redox reaction to proton translocation (for every two electrons transferred, four hydrogen ions are translocated across the cytoplasmic membrane), and thus conserves the redox energy in a proton gradient. This subunit may bind ubiquinone. This Cereibacter sphaeroides (strain ATCC 17029 / ATH 2.4.9) (Rhodobacter sphaeroides) protein is NADH-quinone oxidoreductase subunit H 2.